Here is a 568-residue protein sequence, read N- to C-terminus: 2-succinyl-5-enolpyruvyl-6-hydroxy-3-cyclohexene-1-carboxylate synthase (568 aa).

This sequence belongs to the TPP enzyme family. MenD subfamily. Homodimer. Mg(2+) serves as cofactor. The cofactor is Mn(2+). It depends on thiamine diphosphate as a cofactor.

It carries out the reaction isochorismate + 2-oxoglutarate + H(+) = 5-enolpyruvoyl-6-hydroxy-2-succinyl-cyclohex-3-ene-1-carboxylate + CO2. The protein operates within quinol/quinone metabolism; 1,4-dihydroxy-2-naphthoate biosynthesis; 1,4-dihydroxy-2-naphthoate from chorismate: step 2/7. Its pathway is quinol/quinone metabolism; menaquinone biosynthesis. Catalyzes the thiamine diphosphate-dependent decarboxylation of 2-oxoglutarate and the subsequent addition of the resulting succinic semialdehyde-thiamine pyrophosphate anion to isochorismate to yield 2-succinyl-5-enolpyruvyl-6-hydroxy-3-cyclohexene-1-carboxylate (SEPHCHC). In Histophilus somni (strain 129Pt) (Haemophilus somnus), this protein is 2-succinyl-5-enolpyruvyl-6-hydroxy-3-cyclohexene-1-carboxylate synthase.